Reading from the N-terminus, the 234-residue chain is Chromatin remodeling protein EBS (234 aa).

The BAH domain occupies Lys-29–Arg-144. A PHD-type zinc finger spans residues Ala-146 to Asp-197.

The protein belongs to the SHL1/EBS protein family. Recognizes di- and trimethylated histone H3 at lysine 4 (H3K4me2 and H3K4me3). Interacts with HDA6. As to expression, expressed ubiquitously, with higher levels in floral buds.

It localises to the nucleus. Functionally, chromatin remodeling factor that binds to methylated histone (e.g. H3K4me2/3) to prevent their acetylation (e.g. H3K9K14Ac), likely by recruiting histone deacetylase (HDAC) complexes, and thus regulating the transcription of target genes. Negative regulator in developmental processes in a gibberellic acid- (GA-) dependent manner, such as germination, flowering induction, and flower organ specification, probably by modulating developmental gene expression. Involved in the chromatin-mediated repression of floral initiation and controls genes regulating flowering. Negatively regulates the expression of the floral integrator FT epigenetically, by preventing high levels of H3 acetylation, thus maintaining an inactive chromatin conformation at FT locus. This Arabidopsis thaliana (Mouse-ear cress) protein is Chromatin remodeling protein EBS.